Here is a 519-residue protein sequence, read N- to C-terminus: Cytochrome P450 monooxygenase apdE (519 aa).

A helical membrane pass occupies residues 27 to 47; it reads FVFFAFVVYSCFTIAVGWVVY. Asn327 and Asn379 each carry an N-linked (GlcNAc...) asparagine glycan. Cys466 is a binding site for heme. N-linked (GlcNAc...) asparagine glycosylation is present at Asn508.

It belongs to the cytochrome P450 family. The cofactor is heme.

It is found in the membrane. It participates in secondary metabolite biosynthesis. Its function is as follows. Cytochrome P450 monooxygenase; part of the gene cluster that mediates the biosynthesis of aspyridones. The polyketide-amino acid backbone preaspyridone A is first assembled by the PKS-NRPS hybrid apdA. The assembly of preaspyridone A is initiated by loading of malonyl-CoA onto apdA, followed by decarboxylation to yield the acetyl starter unit. The growing polyketide chain then elongates into a tetraketide. The adpA PKS module catalyzes three Claisen condensations, as well as beta-keto processing and methylation. Alpha-methylation step during polyketide synthesis is a prerequisite and a key checkpoint for chain transfer between PKS and NRPS modules. The downstream NRPS module contains the condensation (C), adenylation (A), and thiolation (T) domains and catalyzes the incorporation of tyrosine via the formation of the L-tyrosinyl-thioester and the amide linkage between L-tyrosinyl-thioester and the tetraketide. The bimodular assembly line is terminated with a reductase (R) domain that facilitates formation and release of the tetramic acid product. Because apdA lacks a designated enoylreductase (ER) domain, the required activity is provided the enoyl reductase apdC. ApdC appears to operate with different stereoselectivity in different PKS cycle. Combined with apdC, apdA is proposed to synthesize preaspyridone A via about 20 enzymatic steps. A number of oxidative steps performed successively by the cytochrome P450 monooxygenases apdE and apdB are required for the conversion of preaspyridone A to aspyridone A. The cytochrome P450 monooxygenase apdE is responsible for the oxidative dephenylation of preaspyridone A. Finally, the predicted FAD-dependent monooxygenase apdD and the acyl-CoA dehydrogenase apdG may be involved in the transformation of aspyridone A into aspyridone B. The chain is Cytochrome P450 monooxygenase apdE from Emericella nidulans (strain FGSC A4 / ATCC 38163 / CBS 112.46 / NRRL 194 / M139) (Aspergillus nidulans).